The sequence spans 29 residues: Cytochrome b6-f complex subunit 8 (29 aa).

The chain crosses the membrane as a helical span at residues 3–23 (IVSLAWAGLMVVFTFSLSLVV).

It belongs to the PetN family. As to quaternary structure, the 4 large subunits of the cytochrome b6-f complex are cytochrome b6, subunit IV (17 kDa polypeptide, PetD), cytochrome f and the Rieske protein, while the 4 small subunits are PetG, PetL, PetM and PetN. The complex functions as a dimer.

The protein localises to the plastid. The protein resides in the chloroplast thylakoid membrane. In terms of biological role, component of the cytochrome b6-f complex, which mediates electron transfer between photosystem II (PSII) and photosystem I (PSI), cyclic electron flow around PSI, and state transitions. This Arabis hirsuta (Hairy rock-cress) protein is Cytochrome b6-f complex subunit 8.